A 261-amino-acid polypeptide reads, in one-letter code: 3-methyl-2-oxobutanoate hydroxymethyltransferase (261 aa).

Positions 42 and 81 each coordinate Mg(2+). Residues 42-43 (DS), Asp-81, and Lys-110 contribute to the 3-methyl-2-oxobutanoate site. Glu-112 serves as a coordination point for Mg(2+). Glu-179 functions as the Proton acceptor in the catalytic mechanism.

It belongs to the PanB family. Homodecamer; pentamer of dimers. It depends on Mg(2+) as a cofactor.

The protein localises to the cytoplasm. The enzyme catalyses 3-methyl-2-oxobutanoate + (6R)-5,10-methylene-5,6,7,8-tetrahydrofolate + H2O = 2-dehydropantoate + (6S)-5,6,7,8-tetrahydrofolate. The protein operates within cofactor biosynthesis; coenzyme A biosynthesis. Its function is as follows. Catalyzes the reversible reaction in which hydroxymethyl group from 5,10-methylenetetrahydrofolate is transferred onto alpha-ketoisovalerate to form ketopantoate. The sequence is that of 3-methyl-2-oxobutanoate hydroxymethyltransferase from Pyrobaculum neutrophilum (strain DSM 2338 / JCM 9278 / NBRC 100436 / V24Sta) (Thermoproteus neutrophilus).